A 179-amino-acid chain; its full sequence is MTRQRIAIDMDEVLADTLGAVVKAVNERADLNIKMESLNGKKLKHMIPEHEGLVMDILKEPGFFRNLDVMPHAQEVVKQLNEHYDIYIATAAMDVPTSFHDKYEWLLEYFPFLDPQHFVFCGRKNIILADYLIDDNPKQLEIFEGKSIMFTASHNVYEHRFERVSGWRDVKNYFNSIEK.

Asp-9 functions as the Nucleophile in the catalytic mechanism. Residues Asp-9, Asp-11, and Asp-135 each coordinate Mg(2+). Asp-11 acts as the Proton donor in catalysis.

It belongs to the 5'(3')-deoxyribonucleotidase family. The cofactor is Mg(2+).

Its function is as follows. Dephosphorylates the 5' and 2'(3')-phosphates of deoxyribonucleotides. This chain is Putative 5'(3')-deoxyribonucleotidase, found in Staphylococcus epidermidis (strain ATCC 12228 / FDA PCI 1200).